An 84-amino-acid polypeptide reads, in one-letter code: MLGINVKKTKEELIISWQLAKITIPLRDVIEVTEDATYAGVEDTSAIRIGTAYGTTDRILIKTVKQNYVLFTTNKVSILNAINA.

It belongs to the UPF0457 family.

In Bacillus thuringiensis subsp. konkukian (strain 97-27), this protein is UPF0457 protein BT9727_2307.